Consider the following 492-residue polypeptide: Bifunctional purine biosynthesis protein PurH (492 aa).

Residues 1–144 (MKKAILSVSN…KNFKHVTTIV (144 aa)) enclose the MGS-like domain.

The protein belongs to the PurH family.

The catalysed reaction is (6R)-10-formyltetrahydrofolate + 5-amino-1-(5-phospho-beta-D-ribosyl)imidazole-4-carboxamide = 5-formamido-1-(5-phospho-D-ribosyl)imidazole-4-carboxamide + (6S)-5,6,7,8-tetrahydrofolate. It catalyses the reaction IMP + H2O = 5-formamido-1-(5-phospho-D-ribosyl)imidazole-4-carboxamide. It functions in the pathway purine metabolism; IMP biosynthesis via de novo pathway; 5-formamido-1-(5-phospho-D-ribosyl)imidazole-4-carboxamide from 5-amino-1-(5-phospho-D-ribosyl)imidazole-4-carboxamide (10-formyl THF route): step 1/1. Its pathway is purine metabolism; IMP biosynthesis via de novo pathway; IMP from 5-formamido-1-(5-phospho-D-ribosyl)imidazole-4-carboxamide: step 1/1. The chain is Bifunctional purine biosynthesis protein PurH from Staphylococcus epidermidis (strain ATCC 35984 / DSM 28319 / BCRC 17069 / CCUG 31568 / BM 3577 / RP62A).